A 251-amino-acid polypeptide reads, in one-letter code: Maleate isomerase (251 aa).

Residues Asn-15, 81–83 (CLV), Tyr-138, and Asn-168 contribute to the substrate site. Cys-81 serves as the catalytic Nucleophile. Cys-81 is subject to S-(2-succinyl)cysteine. Cys-199 serves as the catalytic Proton donor. Position 200-201 (200-201 (VQ)) interacts with substrate.

The protein belongs to the maleate isomerase family. In terms of assembly, homodimer.

The catalysed reaction is maleate = fumarate. In terms of biological role, catalyzes cis-trans isomerization of the C2-C3 double bond in maleate to yield fumarate. The protein is Maleate isomerase of Geobacillus stearothermophilus (Bacillus stearothermophilus).